Reading from the N-terminus, the 353-residue chain is Cyclin-dependent kinase-like 1 (353 aa).

In terms of domain architecture, Protein kinase spans 4–286 (YDRLSKLGEG…CSELMLHGIF (283 aa)). ATP is bound by residues 10-18 (LGEGSYGVV) and lysine 33. The Proton acceptor role is filled by aspartate 126. Residues 331-353 (GGNHGNNNNNGNGINRNFLPTIS) form a disordered region. A compositionally biased stretch (low complexity) spans 335 to 347 (GNNNNNGNGINRN).

Belongs to the protein kinase superfamily. Ser/Thr protein kinase family. In terms of tissue distribution, specifically expressed in head and tail ciliated sensory neurons.

The protein resides in the cell projection. Its subcellular location is the cilium. The enzyme catalyses L-seryl-[protein] + ATP = O-phospho-L-seryl-[protein] + ADP + H(+). It catalyses the reaction L-threonyl-[protein] + ATP = O-phospho-L-threonyl-[protein] + ADP + H(+). Its function is as follows. Modulates cilium assembly. This is Cyclin-dependent kinase-like 1 from Caenorhabditis elegans.